Consider the following 699-residue polypeptide: Endogenous retrovirus group K member 8 Env polyprotein (699 aa).

The tract at residues 1–47 (MNPSEMQRKAPPRRRRHRNRAPLTHKMNKMVTSEEQMKLPSTKKAEP) is disordered. A signal peptide spans 1 to 89 (MNPSEMQRKA…ALMIVSMVVS (89 aa)). The span at 10–20 (APPRRRRHRNR) shows a compositional bias: basic residues. Topologically, residues 90–632 (LPMPAGAAVA…NLNPVTWVKT (543 aa)) are extracellular. Residues asparagine 100, asparagine 128, asparagine 153, asparagine 274, asparagine 355, asparagine 372, and asparagine 461 are each glycosylated (N-linked (GlcNAc...) asparagine). The segment at 466 to 486 (FIFTLIAVIMGLIAVTATAAV) is fusion peptide. N-linked (GlcNAc...) asparagine glycosylation is found at asparagine 507, asparagine 554, asparagine 566, and asparagine 585. The chain crosses the membrane as a helical span at residues 633–653 (IGSTTIINLILILVCLFCLLL). The Cytoplasmic portion of the chain corresponds to 654–699 (VCRCTQQLRRDSDHRERAMMTMAVLSKRKGGNVGKSKRDQIVTVSV).

Belongs to the beta type-B retroviral envelope protein family. HERV class-II K(HML-2) env subfamily. As to quaternary structure, the surface (SU) and transmembrane (TM) proteins form a heterodimer. SU and TM are attached by noncovalent interactions or by a labile interchain disulfide bond. Post-translationally, specific enzymatic cleavages in vivo yield the mature SU and TM proteins.

The protein localises to the cell membrane. The protein resides in the virion. Functionally, retroviral envelope proteins mediate receptor recognition and membrane fusion during early infection. Endogenous envelope proteins may have kept, lost or modified their original function during evolution. This endogenous envelope protein has lost its original fusogenic properties. Its function is as follows. SU mediates receptor recognition. TM anchors the envelope heterodimer to the viral membrane through one transmembrane domain. The other hydrophobic domain, called fusion peptide, mediates fusion of the viral membrane with the target cell membrane. The sequence is that of Endogenous retrovirus group K member 8 Env polyprotein (ERVK-8) from Homo sapiens (Human).